The sequence spans 60 residues: Large ribosomal subunit protein uL30 (60 aa).

It belongs to the universal ribosomal protein uL30 family. In terms of assembly, part of the 50S ribosomal subunit.

The protein is Large ribosomal subunit protein uL30 of Streptococcus equi subsp. equi (strain 4047).